A 257-amino-acid chain; its full sequence is Thiazole synthase (257 aa).

Residue lysine 96 is the Schiff-base intermediate with DXP of the active site. Residues glycine 157, 184 to 185 (AG), and 206 to 207 (NT) contribute to the 1-deoxy-D-xylulose 5-phosphate site.

The protein belongs to the ThiG family. As to quaternary structure, homotetramer. Forms heterodimers with either ThiH or ThiS.

It localises to the cytoplasm. It carries out the reaction [ThiS sulfur-carrier protein]-C-terminal-Gly-aminoethanethioate + 2-iminoacetate + 1-deoxy-D-xylulose 5-phosphate = [ThiS sulfur-carrier protein]-C-terminal Gly-Gly + 2-[(2R,5Z)-2-carboxy-4-methylthiazol-5(2H)-ylidene]ethyl phosphate + 2 H2O + H(+). Its pathway is cofactor biosynthesis; thiamine diphosphate biosynthesis. In terms of biological role, catalyzes the rearrangement of 1-deoxy-D-xylulose 5-phosphate (DXP) to produce the thiazole phosphate moiety of thiamine. Sulfur is provided by the thiocarboxylate moiety of the carrier protein ThiS. In vitro, sulfur can be provided by H(2)S. The sequence is that of Thiazole synthase from Rhizobium meliloti (strain 1021) (Ensifer meliloti).